The chain runs to 69 residues: Sec-independent protein translocase protein TatA (69 aa).

Residues 1–21 (MFGLGGQELVLILLIVLLLFG) form a helical membrane-spanning segment. Basic and acidic residues predominate over residues 47–63 (EEEFNKSMDDNPKKEKA). Positions 47-69 (EEEFNKSMDDNPKKEKATTASKS) are disordered.

The protein belongs to the TatA/E family. As to quaternary structure, forms a complex with TatC.

The protein localises to the cell inner membrane. Part of the twin-arginine translocation (Tat) system that transports large folded proteins containing a characteristic twin-arginine motif in their signal peptide across membranes. TatA could form the protein-conducting channel of the Tat system. The protein is Sec-independent protein translocase protein TatA of Chlorobium chlorochromatii (strain CaD3).